Reading from the N-terminus, the 610-residue chain is Scarecrow-like protein 11 (610 aa).

Disordered regions lie at residues 32–54 (NNLF…PPTV), 98–159 (QQSP…RRNK), and 186–220 (QEEE…HKTN). Composition is skewed to low complexity over residues 41–52 (SQNQSSPNDSPP) and 99–119 (QSPE…GDQD). Composition is skewed to polar residues over residues 123–137 (PSTT…SSGE) and 209–220 (GSSNKSKTHKTN). The GRAS domain occupies 215 to 598 (KTHKTNTVDL…RVIYAFSCWK (384 aa)). A leucine repeat I (LRI) region spans residues 222–283 (VDLRSLLTQC…ARITGNISPP (62 aa)). Residues 302-367 (YKLFVHTCPI…GGPPMLRVTG (66 aa)) are VHIID. Residues 333-337 (LHIVD) carry the VHIID motif. The leucine repeat II (LRII) stretch occupies residues 383–415 (ETGRRLKRFCDQFNVPFEFNFIAKKWETITLDE). Residues 424 to 520 (TVVNCIHRLQ…RELLVRDAMS (97 aa)) form a PFYRE region. The segment at 523 to 598 (SCEGAERFAR…RVIYAFSCWK (76 aa)) is SAW.

Belongs to the GRAS family. In terms of tissue distribution, highly expressed in roots and at lower levels in leaves and sepals. Expressed in siliques.

It is found in the nucleus. Functionally, probable transcription factor involved in plant development. The chain is Scarecrow-like protein 11 (SCL11) from Arabidopsis thaliana (Mouse-ear cress).